The primary structure comprises 231 residues: MKIGIIGAMEPEVAHLIAAMTNATSQTIAGIEFIAGTLAGKDVVVTRSGIGKVAASIATTLLIEKYTPDAVINTGSAGGFVDTLAIGDIVISSEVRHHDVDVTAFGYEIGQMAQQPAAFIPAAHLVEAANKAIAQLGEVKAIEGLICTGDSFICDPVRTQAMLKNFPTMAACEMEGAAIAQVCHQFGVPFVVIRSLSDNANNDSPVDFDSYIVKAGYHSALMVMLLLEQLK.

The active-site Proton acceptor is the Glu12. Substrate-binding positions include Gly78, Ile153, and 174–175 (ME). The active-site Proton donor is Asp198.

It belongs to the PNP/UDP phosphorylase family. MtnN subfamily.

The catalysed reaction is S-adenosyl-L-homocysteine + H2O = S-(5-deoxy-D-ribos-5-yl)-L-homocysteine + adenine. The enzyme catalyses S-methyl-5'-thioadenosine + H2O = 5-(methylsulfanyl)-D-ribose + adenine. It catalyses the reaction 5'-deoxyadenosine + H2O = 5-deoxy-D-ribose + adenine. It participates in amino-acid biosynthesis; L-methionine biosynthesis via salvage pathway; S-methyl-5-thio-alpha-D-ribose 1-phosphate from S-methyl-5'-thioadenosine (hydrolase route): step 1/2. In terms of biological role, catalyzes the irreversible cleavage of the glycosidic bond in both 5'-methylthioadenosine (MTA) and S-adenosylhomocysteine (SAH/AdoHcy) to adenine and the corresponding thioribose, 5'-methylthioribose and S-ribosylhomocysteine, respectively. Also cleaves 5'-deoxyadenosine, a toxic by-product of radical S-adenosylmethionine (SAM) enzymes, into 5-deoxyribose and adenine. This chain is 5'-methylthioadenosine/S-adenosylhomocysteine nucleosidase, found in Shewanella sp. (strain W3-18-1).